A 104-amino-acid chain; its full sequence is NADH-quinone oxidoreductase subunit K (104 aa).

Helical transmembrane passes span 4–24 (VPAS…LFGA), 31–51 (VIVL…LVAF), and 67–87 (LFTM…LIAL).

Belongs to the complex I subunit 4L family. In terms of assembly, NDH-1 is composed of 14 different subunits. Subunits NuoA, H, J, K, L, M, N constitute the membrane sector of the complex.

The protein localises to the cell membrane. It carries out the reaction a quinone + NADH + 5 H(+)(in) = a quinol + NAD(+) + 4 H(+)(out). NDH-1 shuttles electrons from NADH, via FMN and iron-sulfur (Fe-S) centers, to quinones in the respiratory chain. The immediate electron acceptor for the enzyme in this species is believed to be a menaquinone. Couples the redox reaction to proton translocation (for every two electrons transferred, four hydrogen ions are translocated across the cytoplasmic membrane), and thus conserves the redox energy in a proton gradient. The protein is NADH-quinone oxidoreductase subunit K of Bacillus mycoides (strain KBAB4) (Bacillus weihenstephanensis).